An 834-amino-acid chain; its full sequence is Copper-exporting P-type ATPase (834 aa).

Residues 2–186 are Cytoplasmic-facing; that stretch reads SQTIDLTLDG…TAVATMKRFR (185 aa). HMA domains are found at residues 3–64 and 99–162; these read QTID…YDAS and DSQQ…YGAE. Residues cysteine 14, cysteine 17, cysteine 110, and cysteine 113 each contribute to the Cu(+) site. Short sequence motifs (CXXC motif) lie at residues 14-17 and 110-113; these read CGHC and CASC. A helical transmembrane segment spans residues 187 to 207; that stretch reads WQAIVALAVGIPVMVWGMIGD. Over 208-217 the chain is Periplasmic; loop 1; sequence NMMVTADNRS. Residues 218 to 238 traverse the membrane as a helical segment; the sequence is LWLVIGLITLAVMVFAGGHFY. Over 239-253 the chain is Cytoplasmic; the sequence is RSAWKSLLNGAATMD. The chain crosses the membrane as a helical span at residues 254–274; the sequence is TLVALGTGVAWLYSMSVNLWP. At 275–283 the chain is on the periplasmic; loop 2 side; it reads QWFPMEARH. Residues 284 to 304 form a helical membrane-spanning segment; sequence LYYEASAMIIGLINLGHMLEA. Topologically, residues 305–437 are cytoplasmic; that stretch reads RARQRSSKAL…EIGQLADKIS (133 aa). The chain crosses the membrane as a helical span at residues 438 to 458; that stretch reads AVFVPVVVVIALVSAAIWYFF. Residues 459–463 lie on the Periplasmic; loop 3 side of the membrane; the sequence is GPAPQ. The helical transmembrane segment at 464 to 484 threads the bilayer; sequence IVYTLVIATTVLIIACPCALG. At 485–778 the chain is on the cytoplasmic side; that stretch reads LATPMSIISG…ATLHNMKQNL (294 aa). Residue aspartate 523 is the 4-aspartylphosphate intermediate of the active site. 2 residues coordinate Mg(2+): aspartate 720 and aspartate 724. A helical membrane pass occupies residues 779 to 799; sequence LGAFIYNSIGIPVAAGILWPF. Threonine 800 is a topological domain (periplasmic; loop 4). Residues 801–821 traverse the membrane as a helical segment; it reads GTLLNPVVAGAAMALSSITVV. The Cytoplasmic portion of the chain corresponds to 822–834; the sequence is SNANRLLRFKPKE.

It belongs to the cation transport ATPase (P-type) (TC 3.A.3) family. Type IB subfamily. As to quaternary structure, copper-exporting P-type ATPase interacts with apo-periplasmic copper chaperone CusF; when CusF is precharged with copper it binds very little CopA. The periplasmic loops of CopA, especially the first half of loop 1, play a large role in binding to CusF.

It is found in the cell inner membrane. The protein localises to the cytoplasm. It catalyses the reaction Cu(+)(in) + ATP + H2O = Cu(+)(out) + ADP + phosphate + H(+). With respect to regulation, export is inhibited by vanadate. Phosphorylation is inhibited by vanadate and sensitive to KOH and hydroxylamine; it is not inhibited by azide. Phosphorylation is Cu(+) not Cu(2+)-dependent. ATPase activity is inhibited by bathocuproindisulfonate (BCDS), which chelates Cu(+) but not Cu(2+), and stimulated 3-4-fold by Cu(+). ATPase activity is inhibited by Cu(2+) plus DTT or Ag(+). Exports Cu(+) from the cytoplasm to the periplasm. Binds 2 Cu(+) ions per monomer, which are transferred to periplasmic copper chaperone CusF upon ATP hydrolysis. In vitro an excess of CusF over CopA is required for efficient transfer. May also be involved in silver export. Its function is as follows. mRNA is subject to programmed ribosomal frameshifting which produces a cytoplasmic copper chaperone CopA(Z) that corresponds to the first HMA domain. The soluble form is essential for cell survivial in the presence of CuSO(4); in growth competition experiments between wild-type and a version that prevents expression of CopA(Z) after 50 generations the non-CopA(Z) version is nearly extinct. The first HMA domain (residues 1-70) can be replaced by B.subtilis Cu chaperone CopZ. The sequence is that of Copper-exporting P-type ATPase from Escherichia coli (strain K12).